We begin with the raw amino-acid sequence, 356 residues long: Nuclear hormone receptor family member nhr-42 (356 aa).

The nuclear receptor DNA-binding region spans 7 to 82; it reads SQTCLICGDS…VGMRESAVLS (76 aa). The NR C4-type zinc-finger motif lies at 10 to 30; that stretch reads CLICGDSADSLHFGALSCRAC. An NR C4-type; atypical zinc finger spans residues 48 to 70; it reads CDRQCKVDTGMRKLCASCRYDKC. In terms of domain architecture, NR LBD spans 108 to 356; sequence TSDSVLENLQ…HSSIFGNMAE (249 aa).

Belongs to the nuclear hormone receptor family.

It is found in the nucleus. Orphan nuclear receptor. This is Nuclear hormone receptor family member nhr-42 (nhr-42) from Caenorhabditis elegans.